A 105-amino-acid chain; its full sequence is Putative membrane protein insertion efficiency factor (105 aa).

Positions 68 to 105 (FHPGGLDPVPPRRNESGTEISDARPGSDGEASPGAPGL) are disordered. Residues 77–94 (PPRRNESGTEISDARPGS) show a composition bias toward basic and acidic residues.

Belongs to the UPF0161 family.

The protein localises to the cell membrane. Functionally, could be involved in insertion of integral membrane proteins into the membrane. The chain is Putative membrane protein insertion efficiency factor from Thermobifida fusca (strain YX).